A 163-amino-acid chain; its full sequence is Nucleotide-binding protein Clos_1967 (163 aa).

This sequence belongs to the YajQ family.

Nucleotide-binding protein. In Alkaliphilus oremlandii (strain OhILAs) (Clostridium oremlandii (strain OhILAs)), this protein is Nucleotide-binding protein Clos_1967.